The chain runs to 49 residues: MRVKITLACTECKQRNYNTTKEKKNHPDRMETKKFCKFCKSHTLHKETK.

Belongs to the bacterial ribosomal protein bL33 family.

The protein is Large ribosomal subunit protein bL33 of Lachnoclostridium phytofermentans (strain ATCC 700394 / DSM 18823 / ISDg) (Clostridium phytofermentans).